We begin with the raw amino-acid sequence, 84 residues long: Small ribosomal subunit protein bS18 (84 aa).

It belongs to the bacterial ribosomal protein bS18 family. In terms of assembly, part of the 30S ribosomal subunit. Forms a tight heterodimer with protein bS6.

Functionally, binds as a heterodimer with protein bS6 to the central domain of the 16S rRNA, where it helps stabilize the platform of the 30S subunit. In Helicobacter hepaticus (strain ATCC 51449 / 3B1), this protein is Small ribosomal subunit protein bS18.